We begin with the raw amino-acid sequence, 282 residues long: Bifunctional protein FolD (282 aa).

Residues glycine 166 to serine 168 and serine 191 contribute to the NADP(+) site.

This sequence belongs to the tetrahydrofolate dehydrogenase/cyclohydrolase family. In terms of assembly, homodimer.

It catalyses the reaction (6R)-5,10-methylene-5,6,7,8-tetrahydrofolate + NADP(+) = (6R)-5,10-methenyltetrahydrofolate + NADPH. It carries out the reaction (6R)-5,10-methenyltetrahydrofolate + H2O = (6R)-10-formyltetrahydrofolate + H(+). It functions in the pathway one-carbon metabolism; tetrahydrofolate interconversion. Its function is as follows. Catalyzes the oxidation of 5,10-methylenetetrahydrofolate to 5,10-methenyltetrahydrofolate and then the hydrolysis of 5,10-methenyltetrahydrofolate to 10-formyltetrahydrofolate. The chain is Bifunctional protein FolD from Acidovorax ebreus (strain TPSY) (Diaphorobacter sp. (strain TPSY)).